Consider the following 132-residue polypeptide: Chemokine-like protein TAFA-5 (132 aa).

Positions 1–43 are cleaved as a signal peptide; that stretch reads MAPSPRTGSRQDATALPSMSSTFWAFMILASLLIAYCSQLAAG. N-linked (GlcNAc...) asparagine glycosylation occurs at Asn113.

It belongs to the TAFA family. In terms of tissue distribution, expressed in the subcutaneous and perirenal adipose tissue (at protein level). Highly expressed in adipose tissue with moderate expression in the brain and ovary. Isoform 2: Brain-specific.

It localises to the secreted. Its function is as follows. Acts as a chemokine-like protein by regulating cell proliferation and migration through activation of G protein-coupled receptors (GPCRs), such as S1PR2 and FPR2. Stimulates chemotactic migration of macrophages mediated by the MAPK3/ERK1 and AKT1 pathway. Blocks TNFSF11/RANKL-induced osteoclast formation from macrophages by inhibiting up-regulation of osteoclast fusogenic and differentiation genes. Stimulation of macrophage migration and inhibition of osteoclast formation is mediated via GPCR FPR2. Acts as an adipokine by negatively regulating vascular smooth muscle cell (VSMC) proliferation and migration in response to platelet-derived growth factor stimulation via GPCR S1PR2 and G protein GNA12/GNA13-transmitted RHOA signaling. Inhibits injury-induced cell proliferation and neointima formation in the femoral arteries. This chain is Chemokine-like protein TAFA-5, found in Homo sapiens (Human).